Consider the following 215-residue polypeptide: N-(5'-phosphoribosyl)anthranilate isomerase (215 aa).

The protein belongs to the TrpF family.

The catalysed reaction is N-(5-phospho-beta-D-ribosyl)anthranilate = 1-(2-carboxyphenylamino)-1-deoxy-D-ribulose 5-phosphate. It functions in the pathway amino-acid biosynthesis; L-tryptophan biosynthesis; L-tryptophan from chorismate: step 3/5. In Pelodictyon phaeoclathratiforme (strain DSM 5477 / BU-1), this protein is N-(5'-phosphoribosyl)anthranilate isomerase.